Consider the following 2570-residue polypeptide: Highly reducing polyketide synthase tstA (2570 aa).

Residues Ala16 to Asn443 form the Ketosynthase family 3 (KS3) domain. Catalysis depends on for beta-ketoacyl synthase activity residues Cys191, His326, and His366. The interval His458–His478 is disordered. Positions Thr464–His478 are enriched in low complexity. The Malonyl-CoA:ACP transacylase (MAT) domain occupies Phe567–Ala898. The segment at Thr965–Lys1103 is N-terminal hotdog fold. The 329-residue stretch at Thr965–Asp1293 folds into the PKS/mFAS DH domain. The active-site Proton acceptor; for dehydratase activity is the His997. Residues Arg1133–Asp1293 are C-terminal hotdog fold. Asp1198 (proton donor; for dehydratase activity) is an active-site residue. Positions Leu1343–Tyr1645 are methyltransferase (CMeT) domain. In terms of domain architecture, Enoyl reductase (ER) spans Gly1866 to Gly2178. Positions Ala2202 to Ser2379 constitute a Ketoreductase (KR) domain. Residues Asp2482–Ser2559 form the Carrier domain. Residue Ser2519 is modified to O-(pantetheine 4'-phosphoryl)serine.

Requires pantetheine 4'-phosphate as cofactor.

The protein operates within secondary metabolite biosynthesis. In terms of biological role, highly reducing polyketide synthase; part of the gene cluster that mediates the biosynthesis of the antihypercholesterolemic agents phomoidrides which are dimeric anhydrides. The pathway begins with the highly reducing polyketide synthase tstA that catalyzes the formation of a C12-fatty acyl-ACP, starting from one acetate and 5 malonate units. The hydrolase tstM is involved in the release of the C12-fatty acyl chain from tstA. The alkylcitrate synthase (ACS) tstJ and the alkylcitrate dehydratase (ACDH) tstI then give rise to decarboxylated monomeric anhydrides by coupling the C12-fatty acyl chain with oxalacetic acid. The cyclase tstC is responsible for the dimerization of the monomeric anhydrides which leads to the production of prephomoidride that contains the characteristic bicyclo[4.3.1]deca-1,6-diene system of phomoidrides. Iterative oxidation catalyzed by the alpha-ketoglutarate-dependent dioxygenase tstK produced then phomoidride A. Finally, the methyltransferase tstE converts phomoidride A to phomoidride B via an acetalization reaction. The phosphatidylethanolamine-binding protein tstB and tstN are not essential for dimerization and their functions have still to be determined. This chain is Highly reducing polyketide synthase tstA, found in Talaromyces stipitatus (strain ATCC 10500 / CBS 375.48 / QM 6759 / NRRL 1006) (Penicillium stipitatum).